The primary structure comprises 382 residues: Inactive anthranilate O-methyltransferase 1 (382 aa).

Residues Tyr-20, Cys-61, Asn-66, Asp-102, Leu-103, Ser-146, and Tyr-147 each contribute to the S-adenosyl-L-homocysteine site. Mg(2+) contacts are provided by Glu-268 and Phe-270.

This sequence belongs to the methyltransferase superfamily. Type-7 methyltransferase family. SABATH subfamily.

In Zea mays (Maize), this protein is Inactive anthranilate O-methyltransferase 1 (AAMT1I).